The sequence spans 234 residues: Large ribosomal subunit protein bL25 (234 aa).

The segment at 1–24 (MATVMELKATARPKSGKGAARAER) is disordered.

This sequence belongs to the bacterial ribosomal protein bL25 family. CTC subfamily. As to quaternary structure, part of the 50S ribosomal subunit; part of the 5S rRNA/L5/L18/L25 subcomplex. Contacts the 5S rRNA. Binds to the 5S rRNA independently of L5 and L18.

In terms of biological role, this is one of the proteins that binds to the 5S RNA in the ribosome where it forms part of the central protuberance. The protein is Large ribosomal subunit protein bL25 of Rhodopseudomonas palustris (strain BisB5).